We begin with the raw amino-acid sequence, 413 residues long: L-cysteine:1D-myo-inositol 2-amino-2-deoxy-alpha-D-glucopyranoside ligase (413 aa).

Cysteine 43 provides a ligand contact to Zn(2+). Residues 43–46, threonine 58, and 81–83 each bind L-cysteinyl-5'-AMP; these read CGIT and NIT. Residues 45–55 carry the 'HIGH' region motif; sequence ITPYDATHLGH. A 'ERGGDP' region motif is present at residues 187–192; it reads ERGGDP. Tryptophan 227 serves as a coordination point for L-cysteinyl-5'-AMP. Cysteine 231 contributes to the Zn(2+) binding site. 249 to 251 lines the L-cysteinyl-5'-AMP pocket; it reads GND. Histidine 256 contributes to the Zn(2+) binding site. L-cysteinyl-5'-AMP is bound at residue valine 283. A 'KMSKS' region motif is present at residues 289-293; sequence KMSKS.

It belongs to the class-I aminoacyl-tRNA synthetase family. MshC subfamily. In terms of assembly, monomer. Zn(2+) serves as cofactor.

It carries out the reaction 1D-myo-inositol 2-amino-2-deoxy-alpha-D-glucopyranoside + L-cysteine + ATP = 1D-myo-inositol 2-(L-cysteinylamino)-2-deoxy-alpha-D-glucopyranoside + AMP + diphosphate + H(+). Functionally, catalyzes the ATP-dependent condensation of GlcN-Ins and L-cysteine to form L-Cys-GlcN-Ins. The chain is L-cysteine:1D-myo-inositol 2-amino-2-deoxy-alpha-D-glucopyranoside ligase from Gordonia bronchialis (strain ATCC 25592 / DSM 43247 / BCRC 13721 / JCM 3198 / KCTC 3076 / NBRC 16047 / NCTC 10667) (Rhodococcus bronchialis).